The chain runs to 87 residues: Scorpine-like peptide Tco 41.46-2 (87 aa).

Positions 1-19 (MERKLALLLFLGMVTLASC) are cleaved as a signal peptide. Residues 53–87 (QFGCPAYEGYCNNHCQDIERKDGECHGFKCKCAKD) enclose the BetaSPN-type CS-alpha/beta domain. 3 disulfides stabilise this stretch: Cys-56–Cys-77, Cys-63–Cys-82, and Cys-67–Cys-84.

Belongs to the long chain scorpion toxin family. Class 1 subfamily. As to expression, expressed by the venom gland.

The protein localises to the secreted. May have antibacterial activity. Functionally, inhibits voltage-gated potassium channel. In terms of biological role, does not induce hemolytic activity, lactate dehydrogenase (LDH) release from mast cells, mast cell degranulation, and antimicrobial effects. In vivo, injection into mice causes moderate edema formation, but induces very weak or no change in nociceptive sensibility. It also reduces mice locomotion, suggesting an increase in anxiety, but causes no alteration in rearing (standing on hind limbs). This is Scorpine-like peptide Tco 41.46-2 from Tityus costatus (Brazilian scorpion).